The following is a 163-amino-acid chain: Nucleotide-binding protein GTNG_0630 (163 aa).

The protein belongs to the YajQ family.

Functionally, nucleotide-binding protein. The chain is Nucleotide-binding protein GTNG_0630 from Geobacillus thermodenitrificans (strain NG80-2).